A 964-amino-acid chain; its full sequence is Translation initiation factor IF-2 (964 aa).

The tract at residues 26 to 375 (AAGVSKRSPE…QNNQHAFQAP (350 aa)) is disordered. Composition is skewed to basic and acidic residues over residues 49–60 (YLKRSHGAREDS), 91–103 (VRPDDAPRAEAPK), 118–154 (AKPEPKPEPKVEAKPEPKPEPKPEPKVEAKPEPKPEP), 174–206 (IAAREAEEKRQAAFRARQEALMREKIEREERRQ), 225–236 (PQREERRDDRRG), 243–252 (RGPRGNDNRG), and 328–339 (KGGERSWDDNKK). The tr-type G domain occupies 464–633 (PRSPVVTVMG…LLQAEVLELK (170 aa)). A G1 region spans residues 473–480 (GHVDHGKT). 473–480 (GHVDHGKT) provides a ligand contact to GTP. The G2 stretch occupies residues 498–502 (GITQH). Positions 519-522 (DTPG) are G3. GTP is bound by residues 519 to 523 (DTPGH) and 573 to 576 (NKID). The tract at residues 573–576 (NKID) is G4. The tract at residues 609 to 611 (SAK) is G5.

Belongs to the TRAFAC class translation factor GTPase superfamily. Classic translation factor GTPase family. IF-2 subfamily.

It localises to the cytoplasm. Its function is as follows. One of the essential components for the initiation of protein synthesis. Protects formylmethionyl-tRNA from spontaneous hydrolysis and promotes its binding to the 30S ribosomal subunits. Also involved in the hydrolysis of GTP during the formation of the 70S ribosomal complex. The polypeptide is Translation initiation factor IF-2 (Chromobacterium violaceum (strain ATCC 12472 / DSM 30191 / JCM 1249 / CCUG 213 / NBRC 12614 / NCIMB 9131 / NCTC 9757 / MK)).